We begin with the raw amino-acid sequence, 368 residues long: N-acetylneuraminate epimerase (368 aa).

The signal sequence occupies residues 1–19 (MNKTITALAIIMASFAANA). Kelch repeat units lie at residues 40–84 (TVYI…AFID), 86–137 (NLYV…FVHN), 139–173 (KAYV…KINA), 174–219 (YYFD…VNKG), 222–265 (TWLI…VAGG), 287–336 (ENYQ…PWNN), and 338–367 (LLII…VTVQ). Catalysis depends on glutamate 228, which acts as the Proton acceptor.

Belongs to the NanM family. As to quaternary structure, homodimer.

It is found in the periplasm. It carries out the reaction N-acetyl-alpha-neuraminate = N-acetyl-beta-neuraminate. In terms of biological role, converts alpha-N-acetylneuranimic acid (Neu5Ac) to the beta-anomer, accelerating the equilibrium between the alpha- and beta-anomers. Probably facilitates sialidase-negative bacteria to compete successfully for limited amounts of extracellular Neu5Ac, which is likely taken up in the beta-anomer. In addition, the rapid removal of sialic acid from solution might be advantageous to the bacterium to damp down host responses. The polypeptide is N-acetylneuraminate epimerase (Escherichia coli O139:H28 (strain E24377A / ETEC)).